Reading from the N-terminus, the 469-residue chain is Glutamate--tRNA ligase 1 (469 aa).

The 'HIGH' region signature appears at 10–20 (PSPTGYLHVGG). The 'KMSKS' region motif lies at 252-256 (KLSKR). Lys255 is an ATP binding site.

Belongs to the class-I aminoacyl-tRNA synthetase family. Glutamate--tRNA ligase type 1 subfamily. In terms of assembly, monomer.

Its subcellular location is the cytoplasm. It carries out the reaction tRNA(Glu) + L-glutamate + ATP = L-glutamyl-tRNA(Glu) + AMP + diphosphate. In terms of biological role, catalyzes the attachment of glutamate to tRNA(Glu) in a two-step reaction: glutamate is first activated by ATP to form Glu-AMP and then transferred to the acceptor end of tRNA(Glu). The protein is Glutamate--tRNA ligase 1 of Fervidobacterium nodosum (strain ATCC 35602 / DSM 5306 / Rt17-B1).